Reading from the N-terminus, the 179-residue chain is Large ribosomal subunit protein uL5 (179 aa).

The protein belongs to the universal ribosomal protein uL5 family. As to quaternary structure, part of the 50S ribosomal subunit; part of the 5S rRNA/L5/L18/L25 subcomplex. Contacts the 5S rRNA and the P site tRNA. Forms a bridge to the 30S subunit in the 70S ribosome.

Functionally, this is one of the proteins that bind and probably mediate the attachment of the 5S RNA into the large ribosomal subunit, where it forms part of the central protuberance. In the 70S ribosome it contacts protein S13 of the 30S subunit (bridge B1b), connecting the 2 subunits; this bridge is implicated in subunit movement. Contacts the P site tRNA; the 5S rRNA and some of its associated proteins might help stabilize positioning of ribosome-bound tRNAs. In Prochlorococcus marinus (strain MIT 9312), this protein is Large ribosomal subunit protein uL5.